The sequence spans 233 residues: Preprocaerulein type-4 (233 aa).

Residues 1 to 26 (MFKGILLCVLFAVLSANPLSQPEGFA) form the signal peptide. The propeptide occupies 27 to 72 (DEERDVRGLASLLGKALKATLKIGTHFLGGAPQQREANDERRFADG). Q73 is modified (pyrrolidone carboxylic acid). Y76 carries the post-translational modification Sulfotyrosine. F82 bears the Phenylalanine amide mark. Positions 86-87 (DG) are excised as a propeptide. Residue Q88 is modified to Pyrrolidone carboxylic acid. A Sulfotyrosine modification is found at Y91. F97 is modified (phenylalanine amide). The propeptide occupies 101-151 (DDEDDVHERDVRGFGSFLGKALKAALKIGANALGGAPQQREANDERRFADG). The residue at position 152 (Q152) is a Pyrrolidone carboxylic acid. The residue at position 155 (Y155) is a Sulfotyrosine. The residue at position 161 (F161) is a Phenylalanine amide. Residues 165–215 (DDEDDVNERDVRGFGSFLGKALKAALKIGANALGGSPQQREANDERRFADG) constitute a propeptide that is removed on maturation. The tract at residues 197–233 (LGGSPQQREANDERRFADGQQDYTGWMDFGRRNGEDD) is disordered. A Pyrrolidone carboxylic acid modification is found at Q216. Y219 bears the Sulfotyrosine mark. A Phenylalanine amide modification is found at F225. Residues 229 to 233 (NGEDD) constitute a propeptide that is removed on maturation.

The protein belongs to the gastrin/cholecystokinin family. Expressed by the skin glands.

Its subcellular location is the secreted. The pharmacological activities of caerulein are quite similar to the physiological activities of gastrin and related peptides. This is Preprocaerulein type-4 from Xenopus laevis (African clawed frog).